The chain runs to 312 residues: Methionyl-tRNA formyltransferase (312 aa).

112-115 is a binding site for (6S)-5,6,7,8-tetrahydrofolate; sequence SLLP.

It belongs to the Fmt family.

It carries out the reaction L-methionyl-tRNA(fMet) + (6R)-10-formyltetrahydrofolate = N-formyl-L-methionyl-tRNA(fMet) + (6S)-5,6,7,8-tetrahydrofolate + H(+). Functionally, attaches a formyl group to the free amino group of methionyl-tRNA(fMet). The formyl group appears to play a dual role in the initiator identity of N-formylmethionyl-tRNA by promoting its recognition by IF2 and preventing the misappropriation of this tRNA by the elongation apparatus. In Magnetococcus marinus (strain ATCC BAA-1437 / JCM 17883 / MC-1), this protein is Methionyl-tRNA formyltransferase.